A 473-amino-acid polypeptide reads, in one-letter code: Ion-translocating oxidoreductase complex subunit C (473 aa).

4Fe-4S ferredoxin-type domains follow at residues 328 to 357 (KNES…QQLY) and 368 to 396 (TKKH…VKYF). Cysteine 337, cysteine 340, cysteine 343, cysteine 347, cysteine 376, cysteine 379, cysteine 382, and cysteine 386 together coordinate [4Fe-4S] cluster.

It belongs to the 4Fe4S bacterial-type ferredoxin family. RnfC subfamily. In terms of assembly, the complex is composed of six subunits: RnfA, RnfB, RnfC, RnfD, RnfE and RnfG. Requires [4Fe-4S] cluster as cofactor.

It is found in the cell inner membrane. Part of a membrane-bound complex that couples electron transfer with translocation of ions across the membrane. The chain is Ion-translocating oxidoreductase complex subunit C from Buchnera aphidicola subsp. Acyrthosiphon pisum (strain APS) (Acyrthosiphon pisum symbiotic bacterium).